The chain runs to 565 residues: Zinc finger protein 512 (565 aa).

The tract at residues 1–30 (MSSRLGAVPATSGPTTFKQQRSTRIVGAKN) is disordered. Over residues 12–23 (SGPTTFKQQRST) the composition is skewed to polar residues. Glycyl lysine isopeptide (Lys-Gly) (interchain with G-Cter in SUMO2) cross-links involve residues K18 and K83. The tract at residues 85–147 (AATSHVEGSG…QARRIRKEPP (63 aa)) is disordered. Basic residues predominate over residues 118–129 (KKHKLYGRKQRP). A C2H2-type 1 zinc finger spans residues 196-219 (FTCHHCGKQLRSLAGMKYHVMANH). K226 participates in a covalent cross-link: Glycyl lysine isopeptide (Lys-Gly) (interchain with G-Cter in SUMO2). The C2H2-type 2 zinc-finger motif lies at 286 to 309 (LKCHHCGKPYRSKAGLAYHLRSEH). K332 participates in a covalent cross-link: Glycyl lysine isopeptide (Lys-Gly) (interchain with G-Cter in SUMO2). The C2H2-type 3; atypical zinc finger occupies 405-429 (IQCPNQGCEAVYSSVSGLKAHLGSC). A C2H2-type 4 zinc finger spans residues 439-462 (YKCLLCQKEFVSESGVKYHINSVH). The segment covering 484 to 493 (KQRQQEEEKR) has biased composition (basic and acidic residues). Residues 484–565 (KQRQQEEEKR…PKTNHKRGRK (82 aa)) are disordered. Basic residues predominate over residues 494-507 (RQQHRSRRSLRRRQ). A compositionally biased stretch (basic and acidic residues) spans 522 to 531 (VGKDQRRNEE). The span at 554–565 (KPPKTNHKRGRK) shows a compositional bias: basic residues.

The protein belongs to the krueppel C2H2-type zinc-finger protein family.

Its subcellular location is the nucleus. May be involved in transcriptional regulation. This chain is Zinc finger protein 512 (ZNF512), found in Macaca fascicularis (Crab-eating macaque).